The following is a 562-amino-acid chain: MATISPGGAYIGTPSPFLGKKLKPFSLTSPILSFKPTVKLNSSCRAQLIDTVHNLFIGVGVGLPCTVMECGDMIYRSTLPKSNGLTITAPGVALALTALSYLWATPGVAPGFFDMFVLAFVERLFRPTFRKDDFVVGKKLGEGSFGVVYKVSLSKKRSNEEGEYVLKKATEYGAVEIWMNERVRRACGNSCADFVYGFLDKSSKKGPEYWLLWKYEGESTLAGLMQSKEFPYNVETIILGKVQDLPKGLERENKIIQTIMRQLLFALDGLHSTGIIHRDVKPQNIIFSEGSRSFKIIDLGAAADLRVGINYIPKEFLLDPRYAAPEQYIMSTQTPSAPSAPVAAALSPVLWQMNLPDRFDIYSIGLIFLQMAFPSLRSDSNLIQFNRQLKRCDYDLTAWRKLVEPRASADLRRGFELVDLDGGIGWELLTSMVRYKARQRISAKAALAHPYFDRQGLLALSVMQNLRMQYFRATQQDYSEAANWVIQLMAKNGTEKDGGFTETQLQELREKEPRKKANAQRNALASALRLQRKLVKTVTETIDEISDGRKTVWWNRWIPREE.

Residues 1–45 (MATISPGGAYIGTPSPFLGKKLKPFSLTSPILSFKPTVKLNSSCR) constitute a chloroplast transit peptide. The Protein kinase domain occupies 134 to 452 (FVVGKKLGEG…AKAALAHPYF (319 aa)). ATP contacts are provided by residues 140–148 (LGEGSFGVV) and K167. D279 (proton acceptor) is an active-site residue. S526 bears the Phosphoserine mark. T537 and T541 each carry phosphothreonine.

This sequence belongs to the protein kinase superfamily. Ser/Thr protein kinase family. Post-translationally, phosphorylated.

The protein resides in the plastid. It is found in the chloroplast thylakoid membrane. The enzyme catalyses L-seryl-[protein] + ATP = O-phospho-L-seryl-[protein] + ADP + H(+). It catalyses the reaction L-threonyl-[protein] + ATP = O-phospho-L-threonyl-[protein] + ADP + H(+). Its function is as follows. Serine/threonine protein kinase required for state transition by phosphorylating light-harvesting complex II outer antennae (LCHII). State transition plays a central role in response to environmental changes and allows to adjust to changing light conditions via the redistribution of light excitation energy between photosystem II (PSII) and photosystem I (PSI). Phosphorylates the minor light harvesting protein LHCB4.2/CP29 and is involved in the light-dependent phosphorylation of TSP9. Acts as a key component of the long-term response (LTR) signaling pathway. Mediates phosphorylation-dependent PTAC16 subcellular localization to regulate plastid gene expression. This chain is Serine/threonine-protein kinase STN7, chloroplastic (STN7), found in Arabidopsis thaliana (Mouse-ear cress).